The chain runs to 398 residues: Ribosomal RNA small subunit methyltransferase B (398 aa).

Residues 221–227, Asp-242, Asp-268, and Asp-283 contribute to the S-adenosyl-L-methionine site; that span reads CGGAGLK. Cys-336 acts as the Nucleophile in catalysis.

Belongs to the class I-like SAM-binding methyltransferase superfamily. RsmB/NOP family.

The protein resides in the cytoplasm. It catalyses the reaction cytidine(967) in 16S rRNA + S-adenosyl-L-methionine = 5-methylcytidine(967) in 16S rRNA + S-adenosyl-L-homocysteine + H(+). Its function is as follows. Specifically methylates the cytosine at position 967 (m5C967) of 16S rRNA. The polypeptide is Ribosomal RNA small subunit methyltransferase B (Thermus thermophilus (strain ATCC 27634 / DSM 579 / HB8)).